The sequence spans 313 residues: Protein FixB (313 aa).

255-283 provides a ligand contact to FAD; that stretch reads LYLAVGISGQIQHMVGANGAQTIFAINKD.

This sequence belongs to the ETF alpha-subunit/FixB family. Heterodimer of FixA and FixB.

Its pathway is amine and polyamine metabolism; carnitine metabolism. In terms of biological role, required for anaerobic carnitine reduction. May bring reductant to CaiA. The polypeptide is Protein FixB (Salmonella agona (strain SL483)).